Here is a 90-residue protein sequence, read N- to C-terminus: U7-theraphotoxin-Hhn1g (90 aa).

The signal sequence occupies residues 1 to 19 (MKTAIFTVVLALAVFAVLS). A propeptide spanning residues 20-50 (FGWEANEKALSEEFTELIHEKEAASETEARE) is cleaved from the precursor. 3 disulfide bridges follow: Cys-51/Cys-65, Cys-58/Cys-70, and Cys-64/Cys-81.

It belongs to the neurotoxin 10 (Hwtx-1) family. 13 (Hntx-13) subfamily. Expressed by the venom gland.

It is found in the secreted. Ion channel inhibitor. The chain is U7-theraphotoxin-Hhn1g from Cyriopagopus hainanus (Chinese bird spider).